We begin with the raw amino-acid sequence, 457 residues long: MITKEFDTIAAISTPLGEGAIGIVRLSGTDAFAIASTVFKGKDLATVPSHSLNYGHAIDPATGQVLDEVMIGAMRSPKTFTREDVIEINTHGGIAVTNEILQLLIRQGARMAEPGEFTKRAFLNGRVDLTQAEAVMDVIRAKTDKAMHNAVRQLDGSLSQLINDTRQEILNTLAQVEVNIDYPEYDDVEEATTELVREKTLQFQALLENLLRTARRGKILREGIATAIIGRPNVGKSSLLNNLLREEKAIVTDIAGTTRDVIEEYVNIKGVPLKLIDTAGIRETDDIVEKIGVERSKKALEEADLILLVLNASEPLTEQDRNLLAISDMANRIVLLNKTDLEEQIEVDQLPEDVIRISVLQNQNIDQIEEKINQLFFENAGLVEQDATYLSNSRHISLIEQAVQSLHAVNDGLKVGMPVDLLQVDLTRCWQILGEITGDAAPDELITQLFSQFCLGK.

Arg-25, Glu-87, and Arg-126 together coordinate (6S)-5-formyl-5,6,7,8-tetrahydrofolate. A TrmE-type G domain is found at 223 to 377; the sequence is GIATAIIGRP…IEEKINQLFF (155 aa). Asn-233 contributes to the K(+) binding site. GTP contacts are provided by residues 233-238, 252-258, and 277-280; these read NVGKSS, TDIAGTT, and DTAG. A Mg(2+)-binding site is contributed by Ser-237. K(+) is bound by residues Thr-252, Ile-254, and Thr-257. Thr-258 is a Mg(2+) binding site. Lys-457 is a binding site for (6S)-5-formyl-5,6,7,8-tetrahydrofolate.

It belongs to the TRAFAC class TrmE-Era-EngA-EngB-Septin-like GTPase superfamily. TrmE GTPase family. Homodimer. Heterotetramer of two MnmE and two MnmG subunits. The cofactor is K(+).

It is found in the cytoplasm. Functionally, exhibits a very high intrinsic GTPase hydrolysis rate. Involved in the addition of a carboxymethylaminomethyl (cmnm) group at the wobble position (U34) of certain tRNAs, forming tRNA-cmnm(5)s(2)U34. In Streptococcus suis (strain 98HAH33), this protein is tRNA modification GTPase MnmE.